The chain runs to 134 residues: uncharacterized protein (134 aa).

This is an uncharacterized protein from Thermoproteus tenax virus 1 (strain KRA1) (TTV1).